The primary structure comprises 537 residues: Caspase recruitment domain-containing protein 8 (537 aa).

Basic and acidic residues predominate over residues 1–23 (MEKKECPEKSSSSEEELPRRDSG). 2 disordered regions span residues 1 to 28 (MEKK…SRNI) and 113 to 133 (GDIP…SGDI). The interval 161–296 (FLGPEGNVDV…FYAVLESPSF (136 aa)) is ZU5. The FIIND domain occupies 161 to 446 (FLGPEGNVDV…LQLVAASAPP (286 aa)). Residues 297–446 (SLMGILLRIA…LQLVAASAPP (150 aa)) form a UPA region. A CARD domain is found at 446–536 (PPFSGAAFVK…YLVSYLRQQN (91 aa)).

As to quaternary structure, interacts with DPP9; leading to inhibit activation of the inflammasome. DPP9 acts via formation of a ternary complex, composed of a DPP9 homodimer, one full-length CARD8 protein, and one cleaved C-terminus of CARD8 (Caspase recruitment domain-containing protein 8, C-terminus). Interacts with DPP8; leading to inhibit activation of the inflammasome, probably via formation of a ternary complex with DPP8. Interacts with NLRP3. Interacts with IKBKG/NEMO. Interacts with DRAL. Binds to caspase-1 (CASP1), CARD16/pseudo-ICE and CARD18/ICEBERG. Interacts with NLRP2 (via NACHT domain). Interacts with the C-terminal part of CARD8 (Caspase recruitment domain-containing protein 8, C-terminus) in absence of pathogens and other damage-associated signals. In terms of assembly, interacts with the N-terminal part of CARD8 (Caspase recruitment domain-containing protein 8, N-terminus) in absence of pathogens and other damage-associated signals. Homomultimer; forms the CARD8 inflammasome polymeric complex, a filament composed of homopolymers of this form in response to pathogens and other damage-associated signals. The CARD8 inflammasome polymeric complex directly recruits pro-caspase-1 (proCASP1) independently of PYCARD/ASC. Interacts (via CARD domain) with CASP1 (via CARD domain); leading to CASP1 activation. In terms of processing, undergoes autocatalytic processing within the FIIND domain to generate the N-terminal and C-terminal parts, which are associated non-covalently in absence of pathogens and other damage-associated signals. Post-translationally, ubiquitinated by the N-end rule pathway in response to pathogens and other damage-associated signals, leading to its degradation by the proteasome and subsequent release of the cleaved C-terminal part of the protein (Caspase recruitment domain-containing protein 8, C-terminus), which polymerizes and forms the CARD8 inflammasome. (Microbial infection) Proteolytic cleavage by HIV-1 protease in the disordered region and within the ZU5 region of the FIIND domain promotes ubiquitination of the N-terminal part by the N-end rule pathway and degradation by the proteasome, releasing the cleaved C-terminal part of the protein (Caspase recruitment domain-containing protein 8, C-terminus), which polymerizes and forms the CARD8 inflammasome. In terms of processing, undergoes less autocatalytic processing within the FIIND domain compared to isoform 5. In terms of tissue distribution, high expression in lung, ovary, testis and placenta. Lower expression in heart, kidney and liver. Also expressed in spleen, lymph node and bone marrow.

Its subcellular location is the cytoplasm. It localises to the nucleus. The protein localises to the inflammasome. With respect to regulation, CARD8 inflammasome is activated by HIV-1 protease activity: HIV-1 protease cleaves CARD8, promoting ubiquitination and degradation of the N-terminal part, releasing the cleaved C-terminal part of the protein (Caspase recruitment domain-containing protein 8, C-terminus), which polymerizes and forms the CARD8 inflammasome. CARD8 inflammasome is inhibited by DPP8 and DPP9, which sequester the C-terminal fragment of CARD8 (Caspase recruitment domain-containing protein 8, C-terminus) in a ternary complex, thereby preventing CARD8 oligomerization and activation. CARD8 inflammasome is activated by Val-boroPro (Talabostat, PT-100), an inhibitor of dipeptidyl peptidases DPP8 and DPP9. Val-boroPro relieves inhibition of DPP8 and/or DPP9 by inducing the proteasome-mediated destruction of the N-terminal part of CARD8, releasing its C-terminal part from autoinhibition. Indirectly activated by the pseudodipeptide CQ31. CQ31 directly inactivates the peptidases PEPD and XPNPEP1, leading to an accumulation of dipeptides that weaky inhibit DDP8 and DPP9, relieving DPP8- and/or DPP9-mediated inhibition of CARD8. Functionally, inflammasome sensor, which mediates inflammasome activation in response to various pathogen-associated signals, leading to subsequent pyroptosis of CD4(+) T-cells and macrophages. Inflammasomes are supramolecular complexes that assemble in the cytosol in response to pathogens and other damage-associated signals and play critical roles in innate immunity and inflammation. Acts as a recognition receptor (PRR): recognizes specific pathogens and other damage-associated signals, such as HIV-1 protease activity or Val-boroPro inhibitor, and mediates CARD8 inflammasome activation. In response to pathogen-associated signals, the N-terminal part of CARD8 is degraded by the proteasome, releasing the cleaved C-terminal part of the protein (Caspase recruitment domain-containing protein 8, C-terminus), which polymerizes to initiate the formation of the inflammasome complex: the CARD8 inflammasome directly recruits pro-caspase-1 (proCASP1) independently of PYCARD/ASC and promotes caspase-1 (CASP1) activation, which subsequently cleaves and activates inflammatory cytokines IL1B and IL18 and gasdermin-D (GSDMD), leading to pyroptosis. Ability to sense HIV-1 protease activity leads to the clearance of latent HIV-1 in patient CD4(+) T-cells after viral reactivation; in contrast, HIV-1 can evade CARD8-sensing when its protease remains inactive in infected cells prior to viral budding. Also acts as a negative regulator of the NLRP3 inflammasome. May also act as an inhibitor of NF-kappa-B activation. Its function is as follows. Constitutes the precursor of the CARD8 inflammasome, which mediates autoproteolytic processing within the FIIND domain to generate the N-terminal and C-terminal parts, which are associated non-covalently in absence of pathogens and other damage-associated signals. In terms of biological role, regulatory part that prevents formation of the CARD8 inflammasome: in absence of pathogens and other damage-associated signals, interacts with the C-terminal part of CARD8 (Caspase recruitment domain-containing protein 8, C-terminus), preventing activation of the CARD8 inflammasome. In response to pathogen-associated signals, this part is ubiquitinated by the N-end rule pathway and degraded by the proteasome, releasing the cleaved C-terminal part of the protein, which polymerizes and forms the CARD8 inflammasome. Constitutes the active part of the CARD8 inflammasome. In absence of pathogens and other damage-associated signals, interacts with the N-terminal part of CARD8 (Caspase recruitment domain-containing protein 8, N-terminus), preventing activation of the CARD8 inflammasome. In response to pathogen-associated signals, the N-terminal part of CARD8 is degraded by the proteasome, releasing this form, which polymerizes to form the CARD8 inflammasome complex: the CARD8 inflammasome complex then directly recruits pro-caspase-1 (proCASP1) and promotes caspase-1 (CASP1) activation, leading to gasdermin-D (GSDMD) cleavage and subsequent pyroptosis. This chain is Caspase recruitment domain-containing protein 8, found in Homo sapiens (Human).